The following is a 469-amino-acid chain: Aspartyl/glutamyl-tRNA(Asn/Gln) amidotransferase subunit B (469 aa).

It belongs to the GatB/GatE family. GatB subfamily. Heterotrimer of A, B and C subunits.

It carries out the reaction L-glutamyl-tRNA(Gln) + L-glutamine + ATP + H2O = L-glutaminyl-tRNA(Gln) + L-glutamate + ADP + phosphate + H(+). It catalyses the reaction L-aspartyl-tRNA(Asn) + L-glutamine + ATP + H2O = L-asparaginyl-tRNA(Asn) + L-glutamate + ADP + phosphate + 2 H(+). Allows the formation of correctly charged Asn-tRNA(Asn) or Gln-tRNA(Gln) through the transamidation of misacylated Asp-tRNA(Asn) or Glu-tRNA(Gln) in organisms which lack either or both of asparaginyl-tRNA or glutaminyl-tRNA synthetases. The reaction takes place in the presence of glutamine and ATP through an activated phospho-Asp-tRNA(Asn) or phospho-Glu-tRNA(Gln). The sequence is that of Aspartyl/glutamyl-tRNA(Asn/Gln) amidotransferase subunit B from Methanococcus maripaludis (strain C7 / ATCC BAA-1331).